Consider the following 389-residue polypeptide: 1-deoxy-D-xylulose 5-phosphate reductoisomerase (389 aa).

Positions 10, 11, 12, 13, 38, and 122 each coordinate NADPH. Residue K123 coordinates 1-deoxy-D-xylulose 5-phosphate. Position 124 (E124) interacts with NADPH. Residue D148 participates in Mn(2+) binding. 1-deoxy-D-xylulose 5-phosphate is bound by residues S149, E150, S173, and H196. E150 is a binding site for Mn(2+). G202 contacts NADPH. S209, N214, K215, and E218 together coordinate 1-deoxy-D-xylulose 5-phosphate. A Mn(2+)-binding site is contributed by E218.

This sequence belongs to the DXR family. The cofactor is Mg(2+). Mn(2+) serves as cofactor.

The enzyme catalyses 2-C-methyl-D-erythritol 4-phosphate + NADP(+) = 1-deoxy-D-xylulose 5-phosphate + NADPH + H(+). It participates in isoprenoid biosynthesis; isopentenyl diphosphate biosynthesis via DXP pathway; isopentenyl diphosphate from 1-deoxy-D-xylulose 5-phosphate: step 1/6. Catalyzes the NADPH-dependent rearrangement and reduction of 1-deoxy-D-xylulose-5-phosphate (DXP) to 2-C-methyl-D-erythritol 4-phosphate (MEP). The polypeptide is 1-deoxy-D-xylulose 5-phosphate reductoisomerase (Wolbachia sp. subsp. Brugia malayi (strain TRS)).